Here is a 1462-residue protein sequence, read N- to C-terminus: Gag-Pro-Pol polyprotein (1462 aa).

Glycine 2 is lipidated: N-myristoyl glycine; by host. Residues 93-143 (QIPSHPAPPPPSSPTHDPPDSDPQIPPPYVEPTAPQVLPVMHPHGVPPTHR) form a disordered region. Position 105 is a phosphoserine; by host MAPK1 (serine 105). The PPXY motif motif lies at 118–121 (PPPY). The PTAP/PSAP motif motif lies at 124 to 127 (PTAP). CCHC-type zinc fingers lie at residues 355–372 (QPCF…DCAQ) and 378–395 (GPCP…DCPR). Residues 476 to 554 (IEALLDTGAD…NNWAIIGRDA (79 aa)) enclose the Peptidase A2 domain. Aspartate 481 acts as the For protease activity; shared with dimeric partner in catalysis. One can recognise a Reverse transcriptase domain in the interval 614–804 (LEAGHIEPYT…GTIKFLGQII (191 aa)). The Mg(2+) site is built by aspartate 680, aspartate 755, aspartate 756, aspartate 1040, glutamate 1074, aspartate 1096, aspartate 1157, aspartate 1230, and aspartate 1287. Positions 1031–1165 (INTAPCLFSD…TDALLITPIL (135 aa)) constitute an RNase H type-1 domain. Residues 1219–1388 (RGLLPNHIWQ…QPIPETHSLI (170 aa)) form the Integrase catalytic domain. The integrase-type DNA-binding region spans 1393–1443 (HWYYFKLPGLNSRQWKGPQEALQEAAGAALIPVSANSAQWIPWRLLKQAAC).

In terms of assembly, homodimer; the homodimers are part of the immature particles. Interacts with human TSG101 and NEDD4; these interactions are essential for budding and release of viral particles. As to quaternary structure, homodimer; further assembles as homohexamers. The cofactor is Mg(2+). In terms of processing, phosphorylation of the matrix protein p19 by MAPK1 seems to play a role in budding. Myristoylated. Myristoylation of the matrix (MA) domain mediates the transport and binding of Gag polyproteins to the host plasma membrane and is required for the assembly of viral particles. Post-translationally, specific enzymatic cleavages by the viral protease yield mature proteins. The polyprotein is cleaved during and after budding, this process is termed maturation. The protease is autoproteolytically processed at its N- and C-termini.

It is found in the virion. It carries out the reaction Endonucleolytic cleavage to 5'-phosphomonoester.. It catalyses the reaction DNA(n) + a 2'-deoxyribonucleoside 5'-triphosphate = DNA(n+1) + diphosphate. In terms of biological role, the matrix domain targets Gag, Gag-Pro and Gag-Pro-Pol polyproteins to the plasma membrane via a multipartite membrane binding signal, that includes its myristoylated N-terminus. Its function is as follows. Matrix protein. Functionally, forms the spherical core of the virus that encapsulates the genomic RNA-nucleocapsid complex. Binds strongly to viral nucleic acids and promote their aggregation. Also destabilizes the nucleic acids duplexes via highly structured zinc-binding motifs. In terms of biological role, the aspartyl protease mediates proteolytic cleavages of Gag and Gag-Pol polyproteins during or shortly after the release of the virion from the plasma membrane. Cleavages take place as an ordered, step-wise cascade to yield mature proteins. This process is called maturation. Displays maximal activity during the budding process just prior to particle release from the cell (Potential). Cleaves the translation initiation factor eIF4G leading to the inhibition of host cap-dependent translation. Its function is as follows. RT is a multifunctional enzyme that converts the viral RNA genome into dsDNA in the cytoplasm, shortly after virus entry into the cell. This enzyme displays a DNA polymerase activity that can copy either DNA or RNA templates, and a ribonuclease H (RNase H) activity that cleaves the RNA strand of RNA-DNA heteroduplexes in a partially processive 3' to 5'-endonucleasic mode. Conversion of viral genomic RNA into dsDNA requires many steps. A tRNA-Pro binds to the primer-binding site (PBS) situated at the 5'-end of the viral RNA. RT uses the 3' end of the tRNA primer to perform a short round of RNA-dependent minus-strand DNA synthesis. The reading proceeds through the U5 region and ends after the repeated (R) region which is present at both ends of viral RNA. The portion of the RNA-DNA heteroduplex is digested by the RNase H, resulting in a ssDNA product attached to the tRNA primer. This ssDNA/tRNA hybridizes with the identical R region situated at the 3' end of viral RNA. This template exchange, known as minus-strand DNA strong stop transfer, can be either intra- or intermolecular. RT uses the 3' end of this newly synthesized short ssDNA to perform the RNA-dependent minus-strand DNA synthesis of the whole template. RNase H digests the RNA template except for a polypurine tract (PPT) situated at the 5' end of the genome. It is not clear if both polymerase and RNase H activities are simultaneous. RNase H probably can proceed both in a polymerase-dependent (RNA cut into small fragments by the same RT performing DNA synthesis) and a polymerase-independent mode (cleavage of remaining RNA fragments by free RTs). Secondly, RT performs DNA-directed plus-strand DNA synthesis using the PPT that has not been removed by RNase H as primer. PPT and tRNA primers are then removed by RNase H. The 3' and 5' ssDNA PBS regions hybridize to form a circular dsDNA intermediate. Strand displacement synthesis by RT to the PBS and PPT ends produces a blunt ended, linear dsDNA copy of the viral genome that includes long terminal repeats (LTRs) at both ends. Functionally, catalyzes viral DNA integration into the host chromosome, by performing a series of DNA cutting and joining reactions. The sequence is that of Gag-Pro-Pol polyprotein (gag-pro-pol) from Homo sapiens (Human).